The following is a 30-amino-acid chain: Matrix Gla protein (30 aa).

Residues Ser2, Ser3, and Ser5 each carry the phosphoserine modification.

It belongs to the osteocalcin/matrix Gla protein family. Requires vitamin K-dependent gamma-carboxylation for its function.

Its subcellular location is the secreted. Its function is as follows. Associates with the organic matrix of calcified cartilage. This is Matrix Gla protein (mgp) from Prionace glauca (Blue shark).